The primary structure comprises 207 residues: tRNA (pseudouridine(54)-N(1))-methyltransferase (207 aa).

L137 provides a ligand contact to S-adenosyl-L-methionine.

It belongs to the methyltransferase superfamily. TrmY family. In terms of assembly, homodimer.

It localises to the cytoplasm. It carries out the reaction pseudouridine(54) in tRNA + S-adenosyl-L-methionine = N(1)-methylpseudouridine(54) in tRNA + S-adenosyl-L-homocysteine + H(+). Specifically catalyzes the N1-methylation of pseudouridine at position 54 (Psi54) in tRNAs. The sequence is that of tRNA (pseudouridine(54)-N(1))-methyltransferase from Halorubrum lacusprofundi (strain ATCC 49239 / DSM 5036 / JCM 8891 / ACAM 34).